The primary structure comprises 185 residues: Large ribosomal subunit protein uL5 (185 aa).

It belongs to the universal ribosomal protein uL5 family. As to quaternary structure, part of the 50S ribosomal subunit; part of the 5S rRNA/L5/L18/L25 subcomplex. Contacts the 5S rRNA and the P site tRNA. Forms a bridge to the 30S subunit in the 70S ribosome.

This is one of the proteins that bind and probably mediate the attachment of the 5S RNA into the large ribosomal subunit, where it forms part of the central protuberance. In the 70S ribosome it contacts protein S13 of the 30S subunit (bridge B1b), connecting the 2 subunits; this bridge is implicated in subunit movement. Contacts the P site tRNA; the 5S rRNA and some of its associated proteins might help stabilize positioning of ribosome-bound tRNAs. This is Large ribosomal subunit protein uL5 from Bradyrhizobium diazoefficiens (strain JCM 10833 / BCRC 13528 / IAM 13628 / NBRC 14792 / USDA 110).